A 283-amino-acid chain; its full sequence is MSESQTESTTVTLTNGMVIPRIGFGAFMLKYNECYGLVTQALDSGYRHIDTAAVYGNEDICGKAIVDWCEKNNVKRTDIFLTSKLANCSDYYSTRAAIRSSLHHLGTYIDLFLIQSPAGGKKSRIASWKAMEEFVDSGDIRSVGVSNYGVKHLQELYASNPKFYPCVNQIELHPFLSQDDIVKYCQSHDIAIEAYSPLTHGIRLNDEKLVPIAKKLNISVAQLLIRWSLQKGYIPIIKSTKKEHMLSDLDVFNFTIPDDVVQELSSFDEHWHAGTTYDPTVCD.

Y55 functions as the Proton donor in the catalytic mechanism.

This sequence belongs to the aldo/keto reductase family.

The protein localises to the cytoplasm. Its subcellular location is the nucleus. This is an uncharacterized protein from Schizosaccharomyces pombe (strain 972 / ATCC 24843) (Fission yeast).